A 673-amino-acid polypeptide reads, in one-letter code: Potassium voltage-gated channel subfamily KQT member 1 (673 aa).

Disordered regions lie at residues 1–28 (MAAATSPPRAERKRWGGGRLPGARRGSA) and 61–80 (GPSSPAAPAASPAAADLGPR). Residues 1-118 (MAAATSPPRA…YNFLERPTGW (118 aa)) lie on the Cytoplasmic side of the membrane. Serine 27 bears the Phosphoserine mark. The span at 66 to 75 (AAPAASPAAA) shows a compositional bias: low complexity. The chain crosses the membrane as a helical span at residues 119 to 140 (KCFVYHFAVFLIVLVCLIFSVL). Residues 141–151 (STIEQYVALAT) are Extracellular-facing. A helical membrane pass occupies residues 152–174 (GTLFWMEIVLVVFFGTEYAVRLW). Residues 175–190 (SAGCRSKYVGIWGRLR) lie on the Cytoplasmic side of the membrane. A helical transmembrane segment spans residues 191–216 (FARKPISIIDLIVVVASMVVLCVGSK). The Extracellular portion of the chain corresponds to 217 to 224 (GQVFATSA). A helical; Voltage-sensor membrane pass occupies residues 225–240 (IRGIRFLQILRMLHVD). The segment at 236–244 (MLHVDRQGG) is interaction with KCNE3. Residues 241–258 (RQGGTWRLLGSVVFIHRQ) lie on the Cytoplasmic side of the membrane. Glutamine 242 is an a 1,2-diacyl-sn-glycero-3-phospho-(1D-myo-inositol-4,5-bisphosphate) binding site. Residues 259–281 (ELITTLYIGFLGLIFSSYFVYLA) traverse the membrane as a helical segment. Residues 282–297 (EKDAVNESGQVEFGSY) lie on the Extracellular side of the membrane. Asparagine 287 is a glycosylation site (N-linked (GlcNAc...) asparagine). Residues 298-318 (ADALWWGVVTVTTIGYGDKVP) constitute an intramembrane region (pore-forming). Over 319–320 (QT) the chain is Extracellular. The chain crosses the membrane as a helical span at residues 321–346 (WVGKTIASCFSVFAISFFALPAGILG). Over 347–673 (SGFALKVQQK…VPGRGPEEGS (327 aa)) the chain is Cytoplasmic. The interaction with CALM stretch occupies residues 368-380 (AAASLIQTAWRCY). A phosphoserine mark is found at serine 405 and serine 407. An interaction with CALM; calcium-dependent region spans residues 514–528 (KVIRRMQYFVAKKKF). Residues 534–571 (PYDVRDVIEQYSQGHLNLMVRIKELQRRLDQSIGRPAL) form an interaction with KCNE1 C-terminus region. An interaction with AKAP9 region spans residues 587-615 (IGARLNRVEDKVTQLDQRLELITDMLQQL). Positions 588-619 (GARLNRVEDKVTQLDQRLELITDMLQQLLSLH) are C-terminal assembly domain (tetramerization). The interval 619–673 (HRGGTPGSRAPGGGGAQVAQPCSGGSINPELFLPSNALPTYEQLTVPGRGPEEGS) is disordered. The segment covering 622–634 (GTPGSRAPGGGGA) has biased composition (gly residues).

It belongs to the potassium channel family. KQT (TC 1.A.1.15) subfamily. Kv7.1/KCNQ1 sub-subfamily. In terms of assembly, tetramer. Heterotetramer with KCNE1; targets to the membrane raft. Interacts (via C-terminus) with CALM; forms a heterooctameric structure (with 4:4 KCNQ1:CALM stoichiometry) in a calcium-independent manner. Interacts with AKAP9; targets protein kinase A (PKA) catalytic and regulatory subunits and protein phosphatase 1 (PP1) to the KCNQ1-KCNE1 complex, allowing PKA-mediated phosphorylation and increase of delayed rectifier potassium channel activity. Interacts with KCNE2; form a heterooligomer complex that targets to the membrane raft and leading to currents with an apparently instantaneous activation, a rapid deactivation process and a linear current-voltage relationship and decreases the amplitude of the outward current. Interacts with AP2M1; mediates estrogen-induced internalization via clathrin-coated vesicles. Interacts with NEDD4L; promotes internalization and decreases I(Ks) currents. Interacts with USP2; counteracts the NEDD4L-specific down-regulation of I(Ks) and restore plasma membrane localization. Heterotetramer with KCNQ5; has a voltage-gated potassium channel activity. Interacts with KCNE3; four KCNE3 molecules are bound to one KCNQ1 tetramer (4:4 KCNQ1:KCNE3 stoichiometry); alters membrane raft localization; affects KCNQ1 structure and gating properties. Interacts with KCNE4; impairs KCNQ1 localization in lipid rafts and inhibits voltage-gated potassium channel activity. Interacts with KCNE5; impairs KCNQ1 localization in lipid rafts and only conducts current upon strong and continued depolarization. Interacts with SLC5A3; forms coregulatory channel-transporter complexes that modulate Na(+)-coupled myo-inositol influx through the transporter. In terms of processing, ubiquitinated by NEDD4L; promotes internalization. The ubiquitinylated form is internalized through a clathrin-mediated endocytosis by interacting with AP2M1 and is recycled back to the cell membrane via RAB4A and RAB11A. Deubiquitinated by USP2; counteracts the NEDD4L-specific down-regulation of I(Ks) and restores the membrane localization.

The protein resides in the cell membrane. It is found in the cytoplasmic vesicle membrane. Its subcellular location is the early endosome. It localises to the membrane raft. The protein localises to the endoplasmic reticulum. The protein resides in the basolateral cell membrane. It is found in the apical cell membrane. It catalyses the reaction K(+)(in) = K(+)(out). With respect to regulation, PIP2 molecule is essential to activate KCNQ channels by inducing the coupling of the voltage-sensing domain (VSD) and the pore-forming domain (PD). Upon channel activation, PIP2 disrupts the VSD-calmodulin/CALM interactions, causing the release of CALM from the VSD which triggers the opening of the gate. Calcium potentiates KCNQ1 channel current through calcium-bound CALM. Calcium-bound CALM competes with PIP2 to stabilize the channel open state. Functionally, pore-forming subunit of the voltage-gated potassium (Kv) channel involved in the regulation of cardiomyocyte excitability and important in normal development and functions of myocardium, inner ear, stomach and colon. Associates with KCNE beta subunits that modulates current kinetics. Induces a voltage-dependent by rapidly activating and slowly deactivating potassium-selective outward current. Also promotes a delayed voltage activated potassium current showing outward rectification characteristic. During beta-adrenergic receptor stimulation participates in cardiac repolarization by associating with KCNE1 to form the I(Ks) cardiac potassium current that increases the amplitude and slows down the activation kinetics of outward potassium current I(Ks). Muscarinic agonist oxotremorine-M strongly suppresses KCNQ1/KCNE1 current. When associated with KCNE3, forms the potassium channel that is important for cyclic AMP-stimulated intestinal secretion of chloride ions. This interaction with KCNE3 is reduced by 17beta-estradiol, resulting in the reduction of currents. During conditions of increased substrate load, maintains the driving force for proximal tubular and intestinal sodium ions absorption, gastric acid secretion, and cAMP-induced jejunal chloride ions secretion. Allows the provision of potassium ions to the luminal membrane of the secretory canaliculus in the resting state as well as during stimulated acid secretion. When associated with KCNE2, forms a heterooligomer complex leading to currents with an apparently instantaneous activation, a rapid deactivation process and a linear current-voltage relationship and decreases the amplitude of the outward current. When associated with KCNE4, inhibits voltage-gated potassium channel activity. When associated with KCNE5, this complex only conducts current upon strong and continued depolarization. Also forms a heterotetramer with KCNQ5 that has a voltage-gated potassium channel activity. Binds with phosphatidylinositol 4,5-bisphosphate. KCNQ1-KCNE2 channel associates with Na(+)-coupled myo-inositol symporter in the apical membrane of choroid plexus epithelium and regulates the myo-inositol gradient between blood and cerebrospinal fluid with an impact on neuron excitability. This Sus scrofa (Pig) protein is Potassium voltage-gated channel subfamily KQT member 1.